Consider the following 238-residue polypeptide: Major prion protein (238 aa).

The first 15 residues, 1–15 (MLVLFVATWSDLGLC), serve as a signal peptide directing secretion. An interaction with GRB2, ERI3 and SYN1 region spans residues 16 to 215 (KKRPKPGGWN…ESQAYYQRGS (200 aa)). Positions 18–93 (RPKPGGWNTG…WHKPSKPKTS (76 aa)) are disordered. Repeat copies occupy residues 44–52 (PQGGGGWGQ), 53–60 (PHGGGWGQ), 61–68 (PHGGGWGQ), and 69–76 (PHGGGWGQ). The tract at residues 44–76 (PQGGGGWGQPHGGGWGQPHGGGWGQPHGGGWGQ) is 4 X 8 AA tandem repeats of P-H-G-G-G-W-G-Q. Positions 45–80 (QGGGGWGQPHGGGWGQPHGGGWGQPHGGGWGQGGGT) are enriched in gly residues. Residues G47, G48, H54, G55, G56, H62, G63, G64, H70, G71, and G72 each contribute to the Cu(2+) site. Residues 83-93 (QWHKPSKPKTS) show a composition bias toward basic residues. An intrachain disulfide couples C164 to C199. N-linked (GlcNAc...) asparagine glycans are attached at residues N166 and N182. S215 is lipidated: GPI-anchor amidated serine. A propeptide spans 216-238 (SMVLFSSPPVILLISFLIFLIVG) (removed in mature form).

This sequence belongs to the prion family. Monomer and homodimer. Has a tendency to aggregate into amyloid fibrils containing a cross-beta spine, formed by a steric zipper of superposed beta-strands. Soluble oligomers may represent an intermediate stage on the path to fibril formation. Copper binding may promote oligomerization. Interacts with GRB2, APP, ERI3/PRNPIP and SYN1. Mislocalized cytosolically exposed PrP interacts with MGRN1; this interaction alters MGRN1 subcellular location and causes lysosomal enlargement. Interacts with KIAA1191.

Its subcellular location is the cell membrane. It localises to the golgi apparatus. Its function is as follows. Its primary physiological function is unclear. Has cytoprotective activity against internal or environmental stresses. May play a role in neuronal development and synaptic plasticity. May be required for neuronal myelin sheath maintenance. May play a role in iron uptake and iron homeostasis. Soluble oligomers are toxic to cultured neuroblastoma cells and induce apoptosis (in vitro). Association with GPC1 (via its heparan sulfate chains) targets PRNP to lipid rafts. Also provides Cu(2+) or Zn(2+) for the ascorbate-mediated GPC1 deaminase degradation of its heparan sulfate side chains. The protein is Major prion protein (PRNP) of Macaca sylvanus (Barbary macaque).